The following is a 97-amino-acid chain: Co-chaperonin GroES (97 aa).

This sequence belongs to the GroES chaperonin family. As to quaternary structure, heptamer of 7 subunits arranged in a ring. Interacts with the chaperonin GroEL.

Its subcellular location is the cytoplasm. In terms of biological role, together with the chaperonin GroEL, plays an essential role in assisting protein folding. The GroEL-GroES system forms a nano-cage that allows encapsulation of the non-native substrate proteins and provides a physical environment optimized to promote and accelerate protein folding. GroES binds to the apical surface of the GroEL ring, thereby capping the opening of the GroEL channel. The sequence is that of Co-chaperonin GroES from Aeromonas salmonicida (strain A449).